A 337-amino-acid chain; its full sequence is Holliday junction branch migration complex subunit RuvB (337 aa).

The interval 1 to 22 (MEDERITSAEVQSPDEENEELS) is disordered. The large ATPase domain (RuvB-L) stretch occupies residues 1–184 (MEDERITSAE…FGIVEHMNYY (184 aa)). ATP is bound by residues leucine 23, arginine 24, glycine 65, lysine 68, threonine 69, threonine 70, 131–133 (EDF), arginine 174, tyrosine 184, and arginine 221. Threonine 69 lines the Mg(2+) pocket. The segment at 185–255 (NEADLANIVR…LVSQSLKLLQ (71 aa)) is small ATPAse domain (RuvB-S). The head domain (RuvB-H) stretch occupies residues 258–337 (NRGLDRTDKK…LGLIDQYMNK (80 aa)). Residues arginine 313 and arginine 318 each contribute to the DNA site.

It belongs to the RuvB family. Homohexamer. Forms an RuvA(8)-RuvB(12)-Holliday junction (HJ) complex. HJ DNA is sandwiched between 2 RuvA tetramers; dsDNA enters through RuvA and exits via RuvB. An RuvB hexamer assembles on each DNA strand where it exits the tetramer. Each RuvB hexamer is contacted by two RuvA subunits (via domain III) on 2 adjacent RuvB subunits; this complex drives branch migration. In the full resolvosome a probable DNA-RuvA(4)-RuvB(12)-RuvC(2) complex forms which resolves the HJ.

It is found in the cytoplasm. The catalysed reaction is ATP + H2O = ADP + phosphate + H(+). Its function is as follows. The RuvA-RuvB-RuvC complex processes Holliday junction (HJ) DNA during genetic recombination and DNA repair, while the RuvA-RuvB complex plays an important role in the rescue of blocked DNA replication forks via replication fork reversal (RFR). RuvA specifically binds to HJ cruciform DNA, conferring on it an open structure. The RuvB hexamer acts as an ATP-dependent pump, pulling dsDNA into and through the RuvAB complex. RuvB forms 2 homohexamers on either side of HJ DNA bound by 1 or 2 RuvA tetramers; 4 subunits per hexamer contact DNA at a time. Coordinated motions by a converter formed by DNA-disengaged RuvB subunits stimulates ATP hydrolysis and nucleotide exchange. Immobilization of the converter enables RuvB to convert the ATP-contained energy into a lever motion, pulling 2 nucleotides of DNA out of the RuvA tetramer per ATP hydrolyzed, thus driving DNA branch migration. The RuvB motors rotate together with the DNA substrate, which together with the progressing nucleotide cycle form the mechanistic basis for DNA recombination by continuous HJ branch migration. Branch migration allows RuvC to scan DNA until it finds its consensus sequence, where it cleaves and resolves cruciform DNA. In Pediococcus pentosaceus (strain ATCC 25745 / CCUG 21536 / LMG 10740 / 183-1w), this protein is Holliday junction branch migration complex subunit RuvB.